The chain runs to 275 residues: 2-dehydro-3-deoxyphosphooctonate aldolase (275 aa).

The protein belongs to the KdsA family.

The protein localises to the cytoplasm. The catalysed reaction is D-arabinose 5-phosphate + phosphoenolpyruvate + H2O = 3-deoxy-alpha-D-manno-2-octulosonate-8-phosphate + phosphate. The protein operates within carbohydrate biosynthesis; 3-deoxy-D-manno-octulosonate biosynthesis; 3-deoxy-D-manno-octulosonate from D-ribulose 5-phosphate: step 2/3. It functions in the pathway bacterial outer membrane biogenesis; lipopolysaccharide biosynthesis. This chain is 2-dehydro-3-deoxyphosphooctonate aldolase, found in Francisella tularensis subsp. novicida (strain U112).